A 488-amino-acid chain; its full sequence is Homoserine O-acetyltransferase (488 aa).

Residues 47–355 form the AB hydrolase-1 domain; the sequence is NAILVCHALT…SYGHDAFLLE (309 aa). The Nucleophile role is filled by Ser-153. Arg-222 is a substrate binding site. Catalysis depends on residues Asp-316 and His-349. Asp-350 contributes to the substrate binding site. 2 consecutive CBS domains span residues 376-433 and 437-488; these read MTEK…CSKL and MTRD…RLIG.

Belongs to the AB hydrolase superfamily. MetX family. Homodimer.

It is found in the cytoplasm. It catalyses the reaction L-homoserine + acetyl-CoA = O-acetyl-L-homoserine + CoA. It participates in amino-acid biosynthesis; L-methionine biosynthesis via de novo pathway; O-acetyl-L-homoserine from L-homoserine: step 1/1. Its function is as follows. Transfers an acetyl group from acetyl-CoA to L-homoserine, forming acetyl-L-homoserine. The sequence is that of Homoserine O-acetyltransferase from Methanococcoides burtonii (strain DSM 6242 / NBRC 107633 / OCM 468 / ACE-M).